Here is a 265-residue protein sequence, read N- to C-terminus: Beta-lactamase OXA-48 (265 aa).

A signal peptide spans 1–22; the sequence is MRVLALSAVFLVASIIGMPAVA. Ser70 serves as the catalytic Acyl-ester intermediate. A beta-lactam is bound by residues Ser70, Lys73, Ser118, and Arg250. Position 73 is an N6-carboxylysine (Lys73).

It belongs to the class-D beta-lactamase family. In terms of assembly, monomer. Dimer. Post-translationally, carboxylated on the epsilon-amino group of a lysine, with the resulting carbamate functional group serving as a general base. Probably N-carboxylated at Lys-73 at neutral pH in vivo and undergoes complete N-decarboxylation, at pH 4.1, in vitro.

The enzyme catalyses a beta-lactam + H2O = a substituted beta-amino acid. Its activity is regulated as follows. Inhibited by avibactam, related diazabicyclooctane (DBO) derivatives and by bicyclic boronic acids, via a covalent binding to Ser-70. Inhibited by chloride, bromide and iodide ions. Not inhibited by the beta-lactamase-blocking agents, clavulanic acid or tazobactam. Class D beta-lactamase which confers resistance to the beta-lactam antibiotics, including amoxicillin, and moderate resistance to cephalosporins and carbapenems such as cephalothin and imipenem; in the DH10B strain of E.coli. Acts via hydrolysis of the beta-lactam ring. Has oxacillin-, cephalothin- and imipenem-hydrolyzing activities. The polypeptide is Beta-lactamase OXA-48 (Klebsiella pneumoniae).